A 180-amino-acid polypeptide reads, in one-letter code: Chromosome-anchoring protein RacA (180 aa).

The segment at residues 5 to 25 is a DNA-binding region (H-T-H motif); that stretch reads TPFIAKKLGVSPKAVVRIAQQ. Positions 90–150 form a coiled coil; sequence HDFEQLAAQL…KLEAGLKKEE (61 aa).

It belongs to the RacA family.

Its subcellular location is the cytoplasm. In terms of biological role, required for the formation of axial filaments and for anchoring the origin regions at the cell poles in sporulating cells, thus ensuring proper chromosome segregation in the prespore. Binds in a dispersed manner throughout the chromosome but preferentially to sites clustered in the origin portion of the chromosome, causing condensation of the chromosome and its remodeling into an elongated, anchored structure. In Bacillus anthracis (strain A0248), this protein is Chromosome-anchoring protein RacA.